Consider the following 99-residue polypeptide: Acylphosphatase-1 (99 aa).

A2 carries the post-translational modification N-acetylalanine. The Acylphosphatase-like domain occupies 9–99 (SVDYEIFGKV…LDYSDFQIVK (91 aa)). Catalysis depends on residues R24 and N42.

This sequence belongs to the acylphosphatase family.

It carries out the reaction an acyl phosphate + H2O = a carboxylate + phosphate + H(+). The protein is Acylphosphatase-1 (Acyp1) of Mus musculus (Mouse).